A 147-amino-acid polypeptide reads, in one-letter code: Hemoglobin subunit beta (147 aa).

The residue at position 2 (valine 2) is an N-acetylvaline. The 145-residue stretch at 3 to 147 (HLTAEEKAAV…VATALAHKYH (145 aa)) folds into the Globin domain. Phosphothreonine is present on threonine 13. Serine 45 is modified (phosphoserine). Lysine 60 carries the post-translational modification N6-acetyllysine. Residue histidine 64 participates in heme b binding. Lysine 83 bears the N6-acetyllysine mark. Histidine 93 serves as a coordination point for heme b. Cysteine 94 carries the S-nitrosocysteine modification. Lysine 145 carries the post-translational modification N6-acetyllysine.

The protein belongs to the globin family. As to quaternary structure, heterotetramer of two alpha chains and two beta chains. Red blood cells.

In terms of biological role, involved in oxygen transport from the lung to the various peripheral tissues. The polypeptide is Hemoglobin subunit beta (HBB) (Carlito syrichta (Philippine tarsier)).